A 402-amino-acid polypeptide reads, in one-letter code: UPF0597 protein THA_1286 (402 aa).

Belongs to the UPF0597 family.

The protein is UPF0597 protein THA_1286 of Thermosipho africanus (strain TCF52B).